The sequence spans 58 residues: Large ribosomal subunit protein uL30 (58 aa).

This sequence belongs to the universal ribosomal protein uL30 family. In terms of assembly, part of the 50S ribosomal subunit.

In Cytophaga hutchinsonii (strain ATCC 33406 / DSM 1761 / CIP 103989 / NBRC 15051 / NCIMB 9469 / D465), this protein is Large ribosomal subunit protein uL30.